Reading from the N-terminus, the 236-residue chain is 2-C-methyl-D-erythritol 4-phosphate cytidylyltransferase (236 aa).

The protein belongs to the IspD/TarI cytidylyltransferase family. IspD subfamily. Homodimer.

The catalysed reaction is 2-C-methyl-D-erythritol 4-phosphate + CTP + H(+) = 4-CDP-2-C-methyl-D-erythritol + diphosphate. The protein operates within isoprenoid biosynthesis; isopentenyl diphosphate biosynthesis via DXP pathway; isopentenyl diphosphate from 1-deoxy-D-xylulose 5-phosphate: step 2/6. In terms of biological role, catalyzes the formation of 4-diphosphocytidyl-2-C-methyl-D-erythritol from CTP and 2-C-methyl-D-erythritol 4-phosphate (MEP). In Salmonella paratyphi B (strain ATCC BAA-1250 / SPB7), this protein is 2-C-methyl-D-erythritol 4-phosphate cytidylyltransferase.